The following is a 490-amino-acid chain: B3 domain-containing protein LOC_Os12g40080 (490 aa).

The TF-B3 1 DNA-binding region spans 24–117 (GKSFIKVMIT…HFKVWIYDPS (94 aa)). Residues 161-191 (SGHSKETSEINPANSPSWKPTERVPSSEELD) form a disordered region. The span at 169–178 (EINPANSPSW) shows a compositional bias: polar residues. DNA-binding regions (TF-B3) lie at residues 236 to 331 (FYIT…FHPL) and 389 to 487 (VAVM…IRKS).

The protein localises to the nucleus. The protein is B3 domain-containing protein LOC_Os12g40080 of Oryza sativa subsp. japonica (Rice).